An 81-amino-acid polypeptide reads, in one-letter code: Cytochrome b559 subunit alpha (81 aa).

A helical transmembrane segment spans residues 21-35 (VIHSITIPMLFVAGW). Histidine 23 lines the heme pocket.

Belongs to the PsbE/PsbF family. As to quaternary structure, heterodimer of an alpha subunit and a beta subunit. PSII is composed of 1 copy each of membrane proteins PsbA, PsbB, PsbC, PsbD, PsbE, PsbF, PsbH, PsbI, PsbJ, PsbK, PsbL, PsbM, PsbT, PsbX, PsbY, PsbZ, Psb30/Ycf12, peripheral proteins PsbO, CyanoQ (PsbQ), PsbU, PsbV and a large number of cofactors. It forms dimeric complexes. Requires heme b as cofactor.

The protein localises to the cellular thylakoid membrane. This b-type cytochrome is tightly associated with the reaction center of photosystem II (PSII). PSII is a light-driven water:plastoquinone oxidoreductase that uses light energy to abstract electrons from H(2)O, generating O(2) and a proton gradient subsequently used for ATP formation. It consists of a core antenna complex that captures photons, and an electron transfer chain that converts photonic excitation into a charge separation. The protein is Cytochrome b559 subunit alpha of Gloeothece citriformis (strain PCC 7424) (Cyanothece sp. (strain PCC 7424)).